The following is a 229-amino-acid chain: 7-cyano-7-deazaguanine synthase (229 aa).

Residue Leu15–Val25 participates in ATP binding. Residues Cys194, Cys204, Cys207, and Cys210 each contribute to the Zn(2+) site.

This sequence belongs to the QueC family. Zn(2+) serves as cofactor.

It catalyses the reaction 7-carboxy-7-deazaguanine + NH4(+) + ATP = 7-cyano-7-deazaguanine + ADP + phosphate + H2O + H(+). It functions in the pathway purine metabolism; 7-cyano-7-deazaguanine biosynthesis. Catalyzes the ATP-dependent conversion of 7-carboxy-7-deazaguanine (CDG) to 7-cyano-7-deazaguanine (preQ(0)). This chain is 7-cyano-7-deazaguanine synthase, found in Pseudomonas syringae pv. syringae (strain B728a).